The primary structure comprises 474 residues: Aspartyl/glutamyl-tRNA(Asn/Gln) amidotransferase subunit B (474 aa).

Belongs to the GatB/GatE family. GatB subfamily. In terms of assembly, heterotrimer of A, B and C subunits.

The enzyme catalyses L-glutamyl-tRNA(Gln) + L-glutamine + ATP + H2O = L-glutaminyl-tRNA(Gln) + L-glutamate + ADP + phosphate + H(+). It carries out the reaction L-aspartyl-tRNA(Asn) + L-glutamine + ATP + H2O = L-asparaginyl-tRNA(Asn) + L-glutamate + ADP + phosphate + 2 H(+). Allows the formation of correctly charged Asn-tRNA(Asn) or Gln-tRNA(Gln) through the transamidation of misacylated Asp-tRNA(Asn) or Glu-tRNA(Gln) in organisms which lack either or both of asparaginyl-tRNA or glutaminyl-tRNA synthetases. The reaction takes place in the presence of glutamine and ATP through an activated phospho-Asp-tRNA(Asn) or phospho-Glu-tRNA(Gln). This is Aspartyl/glutamyl-tRNA(Asn/Gln) amidotransferase subunit B from Campylobacter curvus (strain 525.92).